A 525-amino-acid polypeptide reads, in one-letter code: Arylsulfatase G (525 aa).

An N-terminal signal peptide occupies residues 1–16 (MGWLFLKVLLVGMAFS). Ca(2+) contacts are provided by aspartate 44, aspartate 45, and cysteine 84. The Nucleophile role is filled by cysteine 84. The residue at position 84 (cysteine 84) is a 3-oxoalanine (Cys). Residue asparagine 117 is glycosylated (N-linked (GlcNAc...) asparagine). Lysine 137 contributes to the substrate binding site. Residue histidine 139 is part of the active site. Serine 162 contributes to the substrate binding site. Asparagine 215 carries N-linked (GlcNAc...) asparagine glycosylation. Histidine 251 contacts substrate. Ca(2+) is bound by residues aspartate 302 and asparagine 303. 2 N-linked (GlcNAc...) asparagine glycosylation sites follow: asparagine 356 and asparagine 497.

This sequence belongs to the sulfatase family. Requires Ca(2+) as cofactor. N-glycosylated with both high mannose and complex type sugars. Post-translationally, the conversion to 3-oxoalanine (also known as C-formylglycine, FGly), of a serine or cysteine residue in prokaryotes and of a cysteine residue in eukaryotes, is critical for catalytic activity. In terms of processing, the 63-kDa precursor undergoes proteolytic processing in two steps, yielding two fragments in the first step (apparent molecular masses of 44 and 18 kDa). In the second step, the 44-kDa fragment is processed further to the 34- and 10-kDa chains. The 10-kDa chain is a cleavage product of the 44-kDa fragment but linked to the 18-kDa chain through a disulfide bridge. Highly expressed in the spleen, kidney, liver, brain, and testis (at protein level).

It is found in the lysosome. The enzyme catalyses an aryl sulfate + H2O = a phenol + sulfate + H(+). It catalyses the reaction Hydrolysis of the 3-sulfate groups of the N-sulfo-D-glucosamine 3-O-sulfate units of heparin.. Functionally, displays arylsulfatase activity at acidic pH towards the artificial substrate p-nitrocatechol sulfate. Catalyzes the hydrolysis of the 3-sulfate groups of the N-sulfo-D-glucosamine 3-O-sulfate units of heparin. The chain is Arylsulfatase G (Arsg) from Mus musculus (Mouse).